The sequence spans 123 residues: MSWRYSILTVDGSFKIFIPWEIFLTWNFLSAAWLNSTESNTYIHYSTCWGTSDYTLNISVIEATTEKLVDTRLLTTLENATAWINSNSIDEDEDDMPHATNVADRLDGLSLSKRVYSICHYEF.

Its function is as follows. Required for normal microtubule organization. The chain is Aberrant microtubules protein 1 (ABM1) from Saccharomyces cerevisiae (strain ATCC 204508 / S288c) (Baker's yeast).